The primary structure comprises 289 residues: Phosphatidylserine decarboxylase proenzyme (289 aa).

Catalysis depends on charge relay system; for autoendoproteolytic cleavage activity residues Asp-92, His-149, and Ser-254. The Schiff-base intermediate with substrate; via pyruvic acid; for decarboxylase activity role is filled by Ser-254. Pyruvic acid (Ser); by autocatalysis is present on Ser-254.

It belongs to the phosphatidylserine decarboxylase family. PSD-B subfamily. Prokaryotic type I sub-subfamily. In terms of assembly, heterodimer of a large membrane-associated beta subunit and a small pyruvoyl-containing alpha subunit. It depends on pyruvate as a cofactor. In terms of processing, is synthesized initially as an inactive proenzyme. Formation of the active enzyme involves a self-maturation process in which the active site pyruvoyl group is generated from an internal serine residue via an autocatalytic post-translational modification. Two non-identical subunits are generated from the proenzyme in this reaction, and the pyruvate is formed at the N-terminus of the alpha chain, which is derived from the carboxyl end of the proenzyme. The autoendoproteolytic cleavage occurs by a canonical serine protease mechanism, in which the side chain hydroxyl group of the serine supplies its oxygen atom to form the C-terminus of the beta chain, while the remainder of the serine residue undergoes an oxidative deamination to produce ammonia and the pyruvoyl prosthetic group on the alpha chain. During this reaction, the Ser that is part of the protease active site of the proenzyme becomes the pyruvoyl prosthetic group, which constitutes an essential element of the active site of the mature decarboxylase.

The protein resides in the cell membrane. The catalysed reaction is a 1,2-diacyl-sn-glycero-3-phospho-L-serine + H(+) = a 1,2-diacyl-sn-glycero-3-phosphoethanolamine + CO2. The protein operates within phospholipid metabolism; phosphatidylethanolamine biosynthesis; phosphatidylethanolamine from CDP-diacylglycerol: step 2/2. Functionally, catalyzes the formation of phosphatidylethanolamine (PtdEtn) from phosphatidylserine (PtdSer). This is Phosphatidylserine decarboxylase proenzyme from Pseudomonas paraeruginosa (strain DSM 24068 / PA7) (Pseudomonas aeruginosa (strain PA7)).